The chain runs to 249 residues: Cytokine-inducible SH2-containing protein (249 aa).

Residues 41–64 form a disordered region; it reads AFPEEPAPTFAAPEPDGSAPQTRD. The 82-residue stretch at 84–165 folds into the SH2 domain; sequence WYWGSITASE…PDVVSLIQHY (82 aa). The SOCS box domain occupies 200 to 248; sequence KLLRPLGRRDSIPSLQHLCRLRINRCTTEVERLPLPRRMGDYLKQYPFQ.

It functions in the pathway protein modification; protein ubiquitination. SOCS family proteins form part of a classical negative feedback system that regulates cytokine signal transduction. CIS is involved in the negative regulation of cytokines that signal through the JAK-STAT5 pathway such as erythropoietin, prolactin and interleukin 3 (IL3) receptor. Inhibits STAT5 trans-activation by suppressing its tyrosine phosphorylation. May be a substrate-recognition component of a SCF-like ECS (Elongin BC-CUL2/5-SOCS-box protein) E3 ubiquitin-protein ligase complex which mediates the ubiquitination and subsequent proteasomal degradation of target proteins. In Gallus gallus (Chicken), this protein is Cytokine-inducible SH2-containing protein (CISH).